Reading from the N-terminus, the 432-residue chain is Adenylosuccinate synthetase (432 aa).

GTP contacts are provided by residues 13–19 (GDEGKGK) and 41–43 (GHT). D14 serves as the catalytic Proton acceptor. Residues D14 and G41 each coordinate Mg(2+). IMP-binding positions include 14–17 (DEGK), 39–42 (NAGH), T130, R144, Q225, T240, and R304. Catalysis depends on H42, which acts as the Proton donor. Residue 300–306 (ATTGRRR) coordinates substrate. GTP is bound by residues R306, 332–334 (KLD), and 415–417 (STG).

The protein belongs to the adenylosuccinate synthetase family. In terms of assembly, homodimer. Mg(2+) serves as cofactor.

The protein localises to the cytoplasm. It catalyses the reaction IMP + L-aspartate + GTP = N(6)-(1,2-dicarboxyethyl)-AMP + GDP + phosphate + 2 H(+). It functions in the pathway purine metabolism; AMP biosynthesis via de novo pathway; AMP from IMP: step 1/2. Its function is as follows. Plays an important role in the de novo pathway of purine nucleotide biosynthesis. Catalyzes the first committed step in the biosynthesis of AMP from IMP. This Pectobacterium atrosepticum (strain SCRI 1043 / ATCC BAA-672) (Erwinia carotovora subsp. atroseptica) protein is Adenylosuccinate synthetase.